Consider the following 1122-residue polypeptide: Desmoglein-2 (1122 aa).

An N-terminal signal peptide occupies residues 1–28 (MARSPGDRCALLLLVQLLAVVCLDFGNG). Residues 29-54 (LHLEVFSPRNEGKPFPKHTHLVRQKR) constitute a propeptide that is removed on maturation. 4 consecutive Cadherin domains span residues 55–164 (AWIT…EPVF), 165–277 (TQEV…IPVV), 278–398 (ENKM…SSVV), and 397–504 (VVSF…CPVL). Residues 55–618 (AWITAPVALR…YDNYVGLGPA (564 aa)) are Extracellular-facing. An N-linked (GlcNAc...) asparagine glycan is attached at asparagine 117. Residues asparagine 314, asparagine 467, and asparagine 519 are each glycosylated (N-linked (GlcNAc...) asparagine). Residues 619-639 (AIALMILALLLLLLVPLLLLI) traverse the membrane as a helical segment. Residues 640–1122 (CHCGGGAKGF…KHSTMQHSYS (483 aa)) lie on the Cytoplasmic side of the membrane. Residues serine 685, serine 706, serine 709, and serine 729 each carry the phosphoserine modification. Residue threonine 808 is modified to Phosphothreonine. Residues serine 810, serine 814, and serine 819 each carry the phosphoserine modification. Desmoglein repeat repeat units follow at residues 885–916 (AYSS…ESSV), 917–945 (SSRQ…SYAK), 946–971 (GSAV…ERVY), 972–995 (APTS…ERVI), 996–1024 (QPNG…ERES), and 1025–1055 (ILAP…ERIL). The interval 913 to 932 (ESSVSSRQSQKVVPPPDPVA) is disordered. Low complexity predominate over residues 914–924 (SSVSSRQSQKV). The interval 1089–1122 (LPNLDLEESDRPNSTITTSSTRVTKHSTMQHSYS) is disordered. Positions 1100–1122 (PNSTITTSSTRVTKHSTMQHSYS) are enriched in polar residues. Phosphoserine is present on serine 1122.

In terms of assembly, interacts with PKP2. Interacts with CTNNB1; the interaction promotes localization of CTNNB1 at cell junctions thus reducing its nuclear localization and subsequent transcription of CTNNB1/TCF-target genes. Palmitoylated by ZDHHC5 at the plasma membrane. Expressed in undifferentiated pluripotent stem cells, expression decreases during differentiation (at protein level). Expressed by embryonic stem cells, expression is reduced during differentiation (at protein level). Expressed at the apical-lateral cell membrane of kidney tubular epithelial cells (at protein level). Expressed in epidermis and heart (at protein level). Expressed in the brain, spleen, lung, liver skeletal muscle, kidney and testis.

The protein resides in the cell membrane. Its subcellular location is the cell junction. It localises to the desmosome. It is found in the cytoplasm. Functionally, a component of desmosome cell-cell junctions which are required for positive regulation of cellular adhesion. Involved in the interaction of plaque proteins and intermediate filaments mediating cell-cell adhesion. Required for proliferation and viability of embryonic stem cells in the blastocyst, thereby crucial for progression of post-implantation embryonic development. Maintains pluripotency by regulating epithelial to mesenchymal transition/mesenchymal to epithelial transition (EMT/MET) via interacting with and sequestering CTNNB1 to sites of cell-cell contact, thereby reducing translocation of CTNNB1 to the nucleus and subsequent transcription of CTNNB1/TCF-target genes. Promotes pluripotency and the multi-lineage differentiation potential of hematopoietic stem cells. Plays a role in endothelial cell sprouting and elongation via mediating the junctional-association of cortical actin fibers and CDH5. Plays a role in limiting inflammatory infiltration and the apoptotic response to injury in kidney tubular epithelial cells, potentially via its role in maintaining cell-cell adhesion and the epithelial barrier. This Mus musculus (Mouse) protein is Desmoglein-2 (Dsg2).